Here is a 75-residue protein sequence, read N- to C-terminus: MKLSMAILLVMALIIFTLDKNYSSPKDLPSCEKGIHRKVTCKQCNKRSDNDDDYTKCCKSFDAFITCGFLLSKES.

The first 23 residues, 1 to 23 (MKLSMAILLVMALIIFTLDKNYS), serve as a signal peptide directing secretion.

Belongs to the scoloptoxin-03 family. In terms of processing, contains 3 disulfide bonds. In terms of tissue distribution, expressed by the venom gland.

The protein resides in the secreted. Inhibits voltage-gated potassium channels. The sequence is that of Kappa-scoloptoxin(03)-Ssm1d from Scolopendra mutilans (Chinese red-headed centipede).